We begin with the raw amino-acid sequence, 419 residues long: Variant surface glycoprotein YnAT 1.1 (419 aa).

Residues 1–28 form the signal peptide; that stretch reads MKRVLSNVLKAWIFTIVAFHNFSTSVTA. Residues asparagine 82 and asparagine 358 are each glycosylated (N-linked (GlcNAc...) asparagine). A disordered region spans residues 369-405; that stretch reads ESSRPPSTDANTSQKGPLQRPEKSGESSHLPSGSSHG. Residues 372–384 show a composition bias toward polar residues; it reads RPPSTDANTSQKG. The N-linked (GlcNAc...) (high mannose) asparagine glycan is linked to asparagine 379. Positions 395 to 405 are enriched in low complexity; it reads SSHLPSGSSHG. The GPI-anchor amidated serine moiety is linked to residue serine 400. The propeptide at 401 to 419 is removed in mature form; the sequence is GSSHGTKAIRSILHVALLM.

It is found in the cell membrane. In terms of biological role, VSG forms a coat on the surface of the parasite. The trypanosome evades the immune response of the host by expressing a series of antigenically distinct VSGs from an estimated 1000 VSG genes. This Trypanosoma congolense protein is Variant surface glycoprotein YnAT 1.1.